The chain runs to 323 residues: tRNA dimethylallyltransferase (323 aa).

12–19 contributes to the ATP binding site; sequence GPTAAGKT. Substrate is bound at residue 14 to 19; the sequence is TAAGKT. 2 interaction with substrate tRNA regions span residues 37–40 and 161–165; these read DSAL and QRLIR.

Belongs to the IPP transferase family. As to quaternary structure, monomer. Requires Mg(2+) as cofactor.

It catalyses the reaction adenosine(37) in tRNA + dimethylallyl diphosphate = N(6)-dimethylallyladenosine(37) in tRNA + diphosphate. Catalyzes the transfer of a dimethylallyl group onto the adenine at position 37 in tRNAs that read codons beginning with uridine, leading to the formation of N6-(dimethylallyl)adenosine (i(6)A). The protein is tRNA dimethylallyltransferase of Pseudomonas syringae pv. syringae (strain B728a).